A 309-amino-acid chain; its full sequence is Ornithine carbamoyltransferase (309 aa).

Residues 56–59 (STRT), glutamine 83, arginine 107, and 134–137 (HPCQ) each bind carbamoyl phosphate. L-ornithine is bound by residues asparagine 165, aspartate 223, and 227-228 (SM). Carbamoyl phosphate is bound by residues 263–264 (CL) and arginine 291.

This sequence belongs to the aspartate/ornithine carbamoyltransferase superfamily. OTCase family.

It is found in the cytoplasm. The catalysed reaction is carbamoyl phosphate + L-ornithine = L-citrulline + phosphate + H(+). It functions in the pathway amino-acid biosynthesis; L-arginine biosynthesis; L-arginine from L-ornithine and carbamoyl phosphate: step 1/3. Its function is as follows. Reversibly catalyzes the transfer of the carbamoyl group from carbamoyl phosphate (CP) to the N(epsilon) atom of ornithine (ORN) to produce L-citrulline. In Burkholderia mallei (strain ATCC 23344), this protein is Ornithine carbamoyltransferase.